We begin with the raw amino-acid sequence, 111 residues long: UPF0060 membrane protein HCH_03337 (111 aa).

Helical transmembrane passes span 8–28 (LLFA…WLVI), 33–53 (SLWL…LLTL), 65–85 (YGGM…GVGL), and 88–108 (FDFL…LQPI).

This sequence belongs to the UPF0060 family.

Its subcellular location is the cell inner membrane. The polypeptide is UPF0060 membrane protein HCH_03337 (Hahella chejuensis (strain KCTC 2396)).